Here is a 67-residue protein sequence, read N- to C-terminus: Conotoxin AbVIN (67 aa).

Residues 1–17 form the signal peptide; that stretch reads VIIIAVLFLTACQLIAT. Residues 18 to 40 constitute a propeptide that is removed on maturation; that stretch reads ASYARSERKHPDLRLSSRNSKLS. Intrachain disulfides connect Cys-43–Cys-57, Cys-50–Cys-61, and Cys-56–Cys-66.

It belongs to the conotoxin O1 superfamily. Expressed by the venom duct.

It is found in the secreted. The chain is Conotoxin AbVIN from Conus abbreviatus (Abbreviated cone).